The following is a 105-amino-acid chain: Urease subunit beta (105 aa).

The protein belongs to the urease beta subunit family. In terms of assembly, heterotrimer of UreA (gamma), UreB (beta) and UreC (alpha) subunits. Three heterotrimers associate to form the active enzyme.

Its subcellular location is the cytoplasm. The enzyme catalyses urea + 2 H2O + H(+) = hydrogencarbonate + 2 NH4(+). The protein operates within nitrogen metabolism; urea degradation; CO(2) and NH(3) from urea (urease route): step 1/1. The chain is Urease subunit beta from Pseudomonas putida (strain GB-1).